We begin with the raw amino-acid sequence, 188 residues long: Elongation factor P (188 aa).

Belongs to the elongation factor P family.

It is found in the cytoplasm. The protein operates within protein biosynthesis; polypeptide chain elongation. Its function is as follows. Involved in peptide bond synthesis. Stimulates efficient translation and peptide-bond synthesis on native or reconstituted 70S ribosomes in vitro. Probably functions indirectly by altering the affinity of the ribosome for aminoacyl-tRNA, thus increasing their reactivity as acceptors for peptidyl transferase. The protein is Elongation factor P of Rickettsia africae (strain ESF-5).